A 268-amino-acid polypeptide reads, in one-letter code: Cytochrome b-c1 complex subunit Rieske-5, mitochondrial (268 aa).

A mitochondrion-targeting transit peptide spans 1-56 (MLRIAGRKLSSSAAARSSSAFFTRNPFTFTDDSSSPTRSPSPTSLASQFLDQFRGF). Residues 57-105 (SSNSVSPAHQTGLVSDLPATVAAIKNPSSKIVYDDSNHERYPPGDPSKR) are Mitochondrial matrix-facing. The helical transmembrane segment at 106–128 (AFAYFVLTGGRFVYASLVRLLIL) threads the bilayer. Residues 129–268 (KFVLSMSASK…FMEENKLLIG (140 aa)) lie on the Mitochondrial intermembrane side of the membrane. The 89-residue stretch at 178 to 266 (INLANSVDLG…YSFMEENKLL (89 aa)) folds into the Rieske domain. Positions 211, 213, 230, and 233 each coordinate [2Fe-2S] cluster. Cysteines 216 and 232 form a disulfide.

This sequence belongs to the Rieske iron-sulfur protein family. As to quaternary structure, component of the ubiquinol-cytochrome c oxidoreductase (cytochrome b-c1 complex, complex III, CIII), a multisubunit enzyme composed of 3 respiratory subunits cytochrome b, cytochrome c1 and Rieske protein, 2 core protein subunits, and several low-molecular weight protein subunits. The complex exists as an obligatory dimer and forms supercomplexes (SCs) in the inner mitochondrial membrane with cytochrome c oxidase (complex IV, CIV). Requires [2Fe-2S] cluster as cofactor. In terms of tissue distribution, high levels are seen in the flowers while a low level expression is seen in the roots, leaves and stems.

The protein resides in the mitochondrion inner membrane. The enzyme catalyses a quinol + 2 Fe(III)-[cytochrome c](out) = a quinone + 2 Fe(II)-[cytochrome c](out) + 2 H(+)(out). Functionally, component of the ubiquinol-cytochrome c oxidoreductase, a multisubunit transmembrane complex that is part of the mitochondrial electron transport chain which drives oxidative phosphorylation. The respiratory chain contains 3 multisubunit complexes succinate dehydrogenase (complex II, CII), ubiquinol-cytochrome c oxidoreductase (cytochrome b-c1 complex, complex III, CIII) and cytochrome c oxidase (complex IV, CIV), that cooperate to transfer electrons derived from NADH and succinate to molecular oxygen, creating an electrochemical gradient over the inner membrane that drives transmembrane transport and the ATP synthase. The cytochrome b-c1 complex catalyzes electron transfer from ubiquinol to cytochrome c, linking this redox reaction to translocation of protons across the mitochondrial inner membrane, with protons being carried across the membrane as hydrogens on the quinol. In the process called Q cycle, 2 protons are consumed from the matrix, 4 protons are released into the intermembrane space and 2 electrons are passed to cytochrome c. The Rieske protein is a catalytic core subunit containing a [2Fe-2S] iron-sulfur cluster. It cycles between 2 conformational states during catalysis to transfer electrons from the quinol bound in the Q(0) site in cytochrome b to cytochrome c1. This is Cytochrome b-c1 complex subunit Rieske-5, mitochondrial from Nicotiana tabacum (Common tobacco).